Here is a 172-residue protein sequence, read N- to C-terminus: Large ribosomal subunit protein uL10 (172 aa).

The protein belongs to the universal ribosomal protein uL10 family. Part of the ribosomal stalk of the 50S ribosomal subunit. The N-terminus interacts with L11 and the large rRNA to form the base of the stalk. The C-terminus forms an elongated spine to which L12 dimers bind in a sequential fashion forming a multimeric L10(L12)X complex.

Functionally, forms part of the ribosomal stalk, playing a central role in the interaction of the ribosome with GTP-bound translation factors. In Chlorobium phaeobacteroides (strain DSM 266 / SMG 266 / 2430), this protein is Large ribosomal subunit protein uL10.